Reading from the N-terminus, the 696-residue chain is DNA-directed RNA polymerase subunit beta' (696 aa).

Cys-69, Cys-71, Cys-87, and Cys-90 together coordinate Zn(2+). Mg(2+) contacts are provided by Asp-504, Asp-506, and Asp-508.

It belongs to the RNA polymerase beta' chain family. RpoC1 subfamily. In plastids the minimal PEP RNA polymerase catalytic core is composed of four subunits: alpha, beta, beta', and beta''. When a (nuclear-encoded) sigma factor is associated with the core the holoenzyme is formed, which can initiate transcription. The cofactor is Mg(2+). Zn(2+) is required as a cofactor.

The protein resides in the plastid. It is found in the chloroplast. It carries out the reaction RNA(n) + a ribonucleoside 5'-triphosphate = RNA(n+1) + diphosphate. Its function is as follows. DNA-dependent RNA polymerase catalyzes the transcription of DNA into RNA using the four ribonucleoside triphosphates as substrates. The sequence is that of DNA-directed RNA polymerase subunit beta' from Pinus koraiensis (Korean pine).